The primary structure comprises 360 residues: Peptide chain release factor 1 (360 aa).

At Gln235 the chain carries N5-methylglutamine. Residues Glu283–Ala293 show a composition bias toward basic and acidic residues. The disordered stretch occupies residues Glu283–Asp305.

This sequence belongs to the prokaryotic/mitochondrial release factor family. Methylated by PrmC. Methylation increases the termination efficiency of RF1.

It is found in the cytoplasm. Functionally, peptide chain release factor 1 directs the termination of translation in response to the peptide chain termination codons UAG and UAA. In Ralstonia pickettii (strain 12J), this protein is Peptide chain release factor 1.